Consider the following 123-residue polypeptide: Small ribosomal subunit protein uS12c (123 aa).

This sequence belongs to the universal ribosomal protein uS12 family. As to quaternary structure, part of the 30S ribosomal subunit.

Its subcellular location is the plastid. It is found in the chloroplast. Functionally, with S4 and S5 plays an important role in translational accuracy. Located at the interface of the 30S and 50S subunits. The protein is Small ribosomal subunit protein uS12c (rps12) of Physcomitrium patens (Spreading-leaved earth moss).